The primary structure comprises 553 residues: CDP-diacylglycerol--glycerol-3-phosphate 3-phosphatidyltransferase, mitochondrial (553 aa).

The transit peptide at 1–25 (MAAPAAGPVFWRRLLGLLPGRPGLA) directs the protein to the mitochondrion. Serine 46 is subject to Phosphoserine. 121–128 (ASLYLGTG) lines the ATP pocket. PLD phosphodiesterase domains are found at residues 212–238 (TIGL…SDSY) and 457–490 (TGWT…GYRS). Residues histidine 217, lysine 219, and aspartate 224 contribute to the active site.

The protein belongs to the CDP-alcohol phosphatidyltransferase class-II family.

Its subcellular location is the mitochondrion. It catalyses the reaction a CDP-1,2-diacyl-sn-glycerol + sn-glycerol 3-phosphate = a 1,2-diacyl-sn-glycero-3-phospho-(1'-sn-glycero-3'-phosphate) + CMP + H(+). It functions in the pathway phospholipid metabolism; phosphatidylglycerol biosynthesis; phosphatidylglycerol from CDP-diacylglycerol: step 1/2. With respect to regulation, activated by calcium and magnesium and inhibited by other bivalent cations. In terms of biological role, functions in the biosynthesis of the anionic phospholipids phosphatidylglycerol and cardiolipin. In Cricetulus griseus (Chinese hamster), this protein is CDP-diacylglycerol--glycerol-3-phosphate 3-phosphatidyltransferase, mitochondrial (PGS1).